The chain runs to 913 residues: DNA polymerase (913 aa).

Positions 182 to 401 are contains conserved residues essential for 3' -&gt; 5' exonuclease activities; sequence PLIIASWDIE…AYARKDTDLP (220 aa).

This sequence belongs to the DNA polymerase type-B family.

It carries out the reaction DNA(n) + a 2'-deoxyribonucleoside 5'-triphosphate = DNA(n+1) + diphosphate. In addition to polymerase activity, this DNA polymerase potentially exhibits 3' to 5' exonuclease activity. In Chlorella (PBCV-NY2A), this protein is DNA polymerase (DPO).